Consider the following 89-residue polypeptide: Small ribosomal subunit protein bS16 (89 aa).

The protein belongs to the bacterial ribosomal protein bS16 family.

The polypeptide is Small ribosomal subunit protein bS16 (Anaplasma marginale (strain Florida)).